The chain runs to 379 residues: Carbamoyl phosphate synthase small chain (379 aa).

A CPSase region spans residues methionine 1–glutamate 189. 3 residues coordinate L-glutamine: serine 47, glycine 241, and glycine 243. The region spanning histidine 193 to alanine 379 is the Glutamine amidotransferase type-1 domain. Cysteine 269 functions as the Nucleophile in the catalytic mechanism. Positions 270, 273, 311, 313, and 314 each coordinate L-glutamine. Active-site residues include histidine 353 and glutamate 355.

This sequence belongs to the CarA family. In terms of assembly, composed of two chains; the small (or glutamine) chain promotes the hydrolysis of glutamine to ammonia, which is used by the large (or ammonia) chain to synthesize carbamoyl phosphate. Tetramer of heterodimers (alpha,beta)4.

It catalyses the reaction hydrogencarbonate + L-glutamine + 2 ATP + H2O = carbamoyl phosphate + L-glutamate + 2 ADP + phosphate + 2 H(+). It carries out the reaction L-glutamine + H2O = L-glutamate + NH4(+). The protein operates within amino-acid biosynthesis; L-arginine biosynthesis; carbamoyl phosphate from bicarbonate: step 1/1. Its pathway is pyrimidine metabolism; UMP biosynthesis via de novo pathway; (S)-dihydroorotate from bicarbonate: step 1/3. Small subunit of the glutamine-dependent carbamoyl phosphate synthetase (CPSase). CPSase catalyzes the formation of carbamoyl phosphate from the ammonia moiety of glutamine, carbonate, and phosphate donated by ATP, constituting the first step of 2 biosynthetic pathways, one leading to arginine and/or urea and the other to pyrimidine nucleotides. The small subunit (glutamine amidotransferase) binds and cleaves glutamine to supply the large subunit with the substrate ammonia. The chain is Carbamoyl phosphate synthase small chain from Vibrio cholerae serotype O1 (strain ATCC 39315 / El Tor Inaba N16961).